The chain runs to 420 residues: Carbohydrate sulfotransferase 1 (420 aa).

Position 1 (M1) is a topological domain, cytoplasmic. Residues Q2 to I23 traverse the membrane as a helical; Signal-anchor for type II membrane protein segment. Topologically, residues R24 to L420 are lumenal. N64 is a glycosylation site (N-linked (GlcNAc...) asparagine). T77–F83 is a 3'-phosphoadenylyl sulfate binding site. 2 N-linked (GlcNAc...) asparagine glycosylation sites follow: N153 and N197. R242 to S250 is a binding site for 3'-phosphoadenylyl sulfate. 2 N-linked (GlcNAc...) asparagine glycosylation sites follow: N342 and N405.

The protein belongs to the sulfotransferase 1 family. Gal/GlcNAc/GalNAc subfamily.

Its subcellular location is the golgi apparatus membrane. The enzyme catalyses 3'-phosphoadenylyl sulfate + keratan = adenosine 3',5'-bisphosphate + keratan 6'-sulfate.. Sulfotransferase that utilizes 3'-phospho-5'-adenylyl sulfate (PAPS) as sulfonate donor to catalyze the transfer of sulfate to position 6 of galactose (Gal) residues of keratan. This Danio rerio (Zebrafish) protein is Carbohydrate sulfotransferase 1 (chst1).